A 142-amino-acid polypeptide reads, in one-letter code: Large ribosomal subunit protein uL13 (142 aa).

The protein belongs to the universal ribosomal protein uL13 family. As to quaternary structure, part of the 50S ribosomal subunit.

Functionally, this protein is one of the early assembly proteins of the 50S ribosomal subunit, although it is not seen to bind rRNA by itself. It is important during the early stages of 50S assembly. The polypeptide is Large ribosomal subunit protein uL13 (Janthinobacterium sp. (strain Marseille) (Minibacterium massiliensis)).